Reading from the N-terminus, the 252-residue chain is Electron transfer flavoprotein subunit beta (252 aa).

It belongs to the ETF beta-subunit/FixA family. As to quaternary structure, heterodimer of an alpha and a beta subunit. The cofactor is AMP.

The protein resides in the cytoplasm. Its pathway is lipid metabolism; butanoate metabolism. Part of an electron transfer flavoprotein involved in syntrophic growth of S.wolfei with butyrate. Probably receives electrons from butyryl-CoA dehydrogenases, and transfers them to the membrane-bound quinone oxidoreductase Swol_0698. This chain is Electron transfer flavoprotein subunit beta, found in Syntrophomonas wolfei subsp. wolfei (strain DSM 2245B / Goettingen).